A 125-amino-acid chain; its full sequence is Small ribosomal subunit protein bS6 (125 aa).

This sequence belongs to the bacterial ribosomal protein bS6 family.

In terms of biological role, binds together with bS18 to 16S ribosomal RNA. This is Small ribosomal subunit protein bS6 (rpsF) from Pasteurella multocida (strain Pm70).